A 664-amino-acid chain; its full sequence is PAN2-PAN3 deadenylation complex subunit PAN3 (664 aa).

Disordered regions lie at residues 1–27 (MATT…GREN) and 54–134 (DPHK…PGTM). The C3H1-type zinc-finger motif lies at 27-56 (NAKDTLCRNVTIYGRCRYEDKGCAFNHDPH). The segment covering 74–96 (DSPSFTPSILSSNGSSPTSQSAT) has biased composition (polar residues). Low complexity predominate over residues 115-131 (PRSISSRSNSSTPTTRP). The pseudokinase domain stretch occupies residues 265–525 (QTLPNTQLPA…NIDIFITGIS (261 aa)). ATP is bound by residues arginine 317, 366–373 (DYHPLSKT), and 425–426 (SK). Residues 526–564 (STLMSTFDSALHLDDQLTSDLSRELENGRLVRLMTKLNF) are a coiled coil. The interval 565–664 (VNERPEYEHD…LKPSASRRLH (100 aa)) is knob domain.

It belongs to the protein kinase superfamily. PAN3 family. In terms of assembly, homodimer. Forms a heterotrimer with a catalytic subunit pan2 to form the poly(A)-nuclease (PAN) deadenylation complex. Interacts (via PAM-2 motif) with poly(A)-binding protein pab1 (via PABC domain), conferring substrate specificity of the enzyme complex.

Its subcellular location is the cytoplasm. In terms of biological role, regulatory subunit of the poly(A)-nuclease (PAN) deadenylation complex, one of two cytoplasmic mRNA deadenylases involved in mRNA turnover. PAN specifically shortens poly(A) tails of RNA and the activity is stimulated by poly(A)-binding protein pab1. PAN deadenylation is followed by rapid degradation of the shortened mRNA tails by the CCR4-NOT complex. Deadenylated mRNAs are then degraded by two alternative mechanisms, namely exosome-mediated 3'-5' exonucleolytic degradation, or deadenylation-dependent mRNA decaping and subsequent 5'-3' exonucleolytic degradation by xrn1. May also be involved in post-transcriptional maturation of mRNA poly(A) tails. pan3 acts as a positive regulator for PAN activity, recruiting the catalytic subunit pan2 to mRNA via its interaction with RNA and with pab1. The polypeptide is PAN2-PAN3 deadenylation complex subunit PAN3 (Aspergillus niger (strain ATCC MYA-4892 / CBS 513.88 / FGSC A1513)).